The primary structure comprises 99 residues: Large ribosomal subunit protein uL23 (99 aa).

Belongs to the universal ribosomal protein uL23 family. In terms of assembly, part of the 50S ribosomal subunit. Contacts protein L29, and trigger factor when it is bound to the ribosome.

One of the early assembly proteins it binds 23S rRNA. One of the proteins that surrounds the polypeptide exit tunnel on the outside of the ribosome. Forms the main docking site for trigger factor binding to the ribosome. This is Large ribosomal subunit protein uL23 from Pseudomonas entomophila (strain L48).